The chain runs to 244 residues: tRNA pseudouridine synthase A (244 aa).

Asp-52 acts as the Nucleophile in catalysis. Tyr-110 is a binding site for substrate.

The protein belongs to the tRNA pseudouridine synthase TruA family. As to quaternary structure, homodimer.

The enzyme catalyses uridine(38/39/40) in tRNA = pseudouridine(38/39/40) in tRNA. In terms of biological role, formation of pseudouridine at positions 38, 39 and 40 in the anticodon stem and loop of transfer RNAs. In Clostridium botulinum (strain Alaska E43 / Type E3), this protein is tRNA pseudouridine synthase A.